The following is an 80-amino-acid chain: Putative ankyrin repeat protein RC0877 (80 aa).

An ANK repeat occupies 6-46; sequence SGGIPLHAVAKNVRCTSKDIKDYEIYKLLVSYGADINARVE.

This is Putative ankyrin repeat protein RC0877 from Rickettsia conorii (strain ATCC VR-613 / Malish 7).